The following is a 565-amino-acid chain: Berberine bridge enzyme-like C-2 (565 aa).

An N-terminal signal peptide occupies residues 1–17; it reads MFPIIILISFSFTFLFA. N-linked (GlcNAc...) asparagine glycosylation is found at Asn28 and Asn40. A disulfide bond links Cys32 and Cys94. Residues 72 to 248 form the FAD-binding PCMH-type domain; it reads YMPKPTVIIL…YAWKIRLLKV (177 aa). At His109 the chain carries Pros-8alpha-FAD histidine. Asn363 and Asn502 each carry an N-linked (GlcNAc...) asparagine glycan.

It belongs to the oxygen-dependent FAD-linked oxidoreductase family. The cofactor is FAD.

The protein resides in the vacuole. It participates in alkaloid biosynthesis; nicotine biosynthesis. In terms of biological role, involved in the biosynthesis of pyridine alkaloid natural products, leading mainly to the production of anabasine, anatabine, nicotine and nornicotine, effective deterrents against herbivores with antiparasitic and pesticide properties (neurotoxins); nornicotine serves as the precursor in the synthesis of the carcinogen compound N'-nitrosonornicotine (NNN). Catalyzes a late oxidation step subsequent to the pyridine ring condensation reaction in the biosynthesis of alkaloids. This chain is Berberine bridge enzyme-like C-2, found in Nicotiana tabacum (Common tobacco).